Consider the following 209-residue polypeptide: Max dimerization protein 4 (209 aa).

Residues 6–23 (LLILLEAAEYLERRDREA) form an interaction with SIN3A and SIN3B region. The region spanning 53–105 (NNRSSHNELEKHRRAKLRLYLEQLKQLVPLGPDSTRHTTLSLLKRAKVHIKKL) is the bHLH domain. Residues 140–209 (RVRTDSTGSA…CRRLGRPALS (70 aa)) form a disordered region. Residues 153 to 163 (DDSEQEVDIEG) are compositionally biased toward acidic residues. The span at 199–209 (HCRRLGRPALS) shows a compositional bias: basic residues.

As to quaternary structure, efficient DNA binding requires dimerization with another bHLH protein. Binds DNA as a heterodimer with MAX. Interacts with SIN3A AND SIN3B. Interacts with RNF17.

The protein resides in the nucleus. Its function is as follows. Transcriptional repressor. Binds with MAX to form a sequence-specific DNA-binding protein complex which recognizes the core sequence 5'-CAC[GA]TG-3'. Antagonizes MYC transcriptional activity by competing for MAX and suppresses MYC dependent cell transformation. The sequence is that of Max dimerization protein 4 (MXD4) from Homo sapiens (Human).